Reading from the N-terminus, the 238-residue chain is Cysteine-rich venom protein pseudechetoxin (238 aa).

A signal peptide spans 1-19 (MIAFIVLLSLAAVLQQSSG). Positions 20–27 (TADFASES) are excised as a propeptide. The 127-residue stretch at 38–164 (VDKHNALRRS…SSKYLYVCQY (127 aa)) folds into the SCP domain. The Zn(2+) site is built by T51 and S106. Cystine bridges form between C75–C153, C92–C165, C148–C162, C184–C191, C187–C196, C200–C233, C209–C227, and C218–C231. A ShKT domain is found at 200–233 (CKRNNDFSNCKSLAKKSKCQTEWIKKKCPASCFC).

As to expression, expressed by the venom gland.

Its subcellular location is the secreted. Functionally, blocks olfactory (CNGA2) and retinal (CNGA1) cyclic nucleotide-gated (CNG) ion channel currents. Does not inhibit retinal (CNGA3) currents. It forms high-affinity contacts with the pore turret region and most likely inhibits CNG channel current by blocking the external entrance to the transmembrane pore. Is really more potent that Pseudecin. Does not affect neither depolarization- nor caffeine-induced contraction arterial smooth muscle. In Pseudechis australis (Mulga snake), this protein is Cysteine-rich venom protein pseudechetoxin.